Here is a 160-residue protein sequence, read N- to C-terminus: Lipoprotein signal peptidase (160 aa).

Transmembrane regions (helical) follow at residues 63–83 (YRLPFFILVSVVALGVIAVTF) and 89–109 (DQHLAAAALALIFSGALGNLI). Residues D119 and D137 contribute to the active site. A helical membrane pass occupies residues 132 to 152 (AFNVADSAICVGVALLAVDMI).

The protein belongs to the peptidase A8 family.

The protein localises to the cell inner membrane. It catalyses the reaction Release of signal peptides from bacterial membrane prolipoproteins. Hydrolyzes -Xaa-Yaa-Zaa-|-(S,diacylglyceryl)Cys-, in which Xaa is hydrophobic (preferably Leu), and Yaa (Ala or Ser) and Zaa (Gly or Ala) have small, neutral side chains.. The protein operates within protein modification; lipoprotein biosynthesis (signal peptide cleavage). This protein specifically catalyzes the removal of signal peptides from prolipoproteins. This is Lipoprotein signal peptidase from Geobacter sulfurreducens (strain ATCC 51573 / DSM 12127 / PCA).